The primary structure comprises 1132 residues: NUT family member 1 (1132 aa).

Disordered regions lie at residues M1–S56, A337–P365, L383–Y405, E476–R584, R693–D714, D873–S892, and P922–L1017. The segment covering A21–D36 has biased composition (pro residues). A compositionally biased stretch (basic residues) spans A337–Q352. The span at E395–M404 shows a compositional bias: acidic residues. 3 stretches are compositionally biased toward polar residues: residues S487–G497, M697–S706, and E883–S892. Residues G932–K942 show a composition bias toward basic and acidic residues. Polar residues predominate over residues Q950–G971. Residues S1026, S1029, and S1031 each carry the phosphoserine modification. Residues S1031–Q1132 form a disordered region. Q1046 bears the N5-methylglutamine mark. The segment covering G1123–Q1132 has biased composition (basic residues).

The protein belongs to the NUT family. In terms of processing, methylated at Gln-1046 by N6AMT1. Post-translationally, phosphorylation on Ser-1026, Ser-1029 or Ser-1031 is important for cytoplasmic export. In terms of tissue distribution, specifically expressed in testis.

The protein resides in the cytoplasm. The protein localises to the nucleus. Functionally, plays a role in the regulation of proliferation. Regulates TERT expression by modulating SP1 binding to TERT promoter binding sites. The polypeptide is NUT family member 1 (Homo sapiens (Human)).